A 129-amino-acid chain; its full sequence is Ribosome-binding factor A (129 aa).

The protein belongs to the RbfA family. Monomer. Binds 30S ribosomal subunits, but not 50S ribosomal subunits or 70S ribosomes.

It is found in the cytoplasm. One of several proteins that assist in the late maturation steps of the functional core of the 30S ribosomal subunit. Associates with free 30S ribosomal subunits (but not with 30S subunits that are part of 70S ribosomes or polysomes). Required for efficient processing of 16S rRNA. May interact with the 5'-terminal helix region of 16S rRNA. The sequence is that of Ribosome-binding factor A from Thioalkalivibrio sulfidiphilus (strain HL-EbGR7).